The primary structure comprises 266 residues: Thymidylate synthase (266 aa).

Arg24 lines the dUMP pocket. (6R)-5,10-methylene-5,6,7,8-tetrahydrofolate is bound at residue His54. 129–130 serves as a coordination point for dUMP; the sequence is RR. Cys149 serves as the catalytic Nucleophile. Residues 169–172, Asn180, and 210–212 each bind dUMP; these read RSAD and HIY. Residue Asp172 participates in (6R)-5,10-methylene-5,6,7,8-tetrahydrofolate binding. Ala265 contacts (6R)-5,10-methylene-5,6,7,8-tetrahydrofolate.

Belongs to the thymidylate synthase family. Bacterial-type ThyA subfamily. In terms of assembly, homodimer.

The protein localises to the cytoplasm. The enzyme catalyses dUMP + (6R)-5,10-methylene-5,6,7,8-tetrahydrofolate = 7,8-dihydrofolate + dTMP. The protein operates within pyrimidine metabolism; dTTP biosynthesis. Catalyzes the reductive methylation of 2'-deoxyuridine-5'-monophosphate (dUMP) to 2'-deoxythymidine-5'-monophosphate (dTMP) while utilizing 5,10-methylenetetrahydrofolate (mTHF) as the methyl donor and reductant in the reaction, yielding dihydrofolate (DHF) as a by-product. This enzymatic reaction provides an intracellular de novo source of dTMP, an essential precursor for DNA biosynthesis. This is Thymidylate synthase from Corynebacterium glutamicum (strain R).